The chain runs to 387 residues: Methionine aminopeptidase 1 (387 aa).

Ser2 is modified (N-acetylserine). Positions 2–10 (STATTTVTT) are excised as a propeptide. A C6H2-type zinc finger spans residues 19–73 (KIYCSGLQCGRETSSQMKCPVCLKQGIVSIFCDTSCYENNYKAHKALHNAKDGLE). Residues Cys22, Cys27, Cys37, Cys40, Cys50, Cys54, His62, and His66 each coordinate Zn(2+). His202 serves as a coordination point for a protein. Residues Asp219, Asp230, and His294 each coordinate Zn(2+). Residue His301 participates in a protein binding. Positions 327 and 358 each coordinate Zn(2+).

This sequence belongs to the peptidase M24A family. Methionine aminopeptidase type 1 subfamily. In terms of assembly, associates with the 60S ribosomal subunit of the 80S translational complex. Zn(2+) serves as cofactor. The cofactor is Co(2+). Requires Mn(2+) as cofactor. Fe(2+) is required as a cofactor.

Its subcellular location is the cytoplasm. The enzyme catalyses Release of N-terminal amino acids, preferentially methionine, from peptides and arylamides.. In contract to the MetAP 2 isoform, is not inhibited by the fungal metabolite fumagillin, an antiangiogenic drug. Cotranslationally removes the N-terminal methionine from nascent proteins. The N-terminal methionine is often cleaved when the second residue in the primary sequence is small and uncharged (Met-Ala-, Cys, Gly, Pro, Ser, Thr, or Val). Plays the major role in N-terminal methionine removal. Less efficient when the second residue is Val. The protein is Methionine aminopeptidase 1 (MAP1) of Saccharomyces cerevisiae (strain ATCC 204508 / S288c) (Baker's yeast).